The following is a 332-amino-acid chain: Beta-1,3-N-acetylglucosaminyltransferase radical fringe (332 aa).

Topologically, residues 1–6 (MSRARR) are cytoplasmic. Residues 7–29 (VLCRACLALAAVLAVLLLLPLPL) form a helical; Signal-anchor for type II membrane protein membrane-spanning segment. The Lumenal portion of the chain corresponds to 30-332 (PLPLPRAPAP…MKNRVEGAFQ (303 aa)). Substrate is bound at residue Arg75. Asn114 is a glycosylation site (N-linked (GlcNAc...) asparagine). 2 disulfide bridges follow: Cys115/Cys126 and Cys144/Cys208. Asp148 is a binding site for substrate. Asp149 contributes to the Mn(2+) binding site. Asp238 is a catalytic residue. A Mn(2+)-binding site is contributed by His262. A disulfide bridge links Cys312 with Cys321.

This sequence belongs to the glycosyltransferase 31 family. The cofactor is Mn(2+). In terms of tissue distribution, detected in all the examined tissues (12.5 dpc). High expression found in adult brain.

The protein localises to the golgi apparatus membrane. It carries out the reaction 3-O-(alpha-L-fucosyl)-L-threonyl-[EGF-like domain protein] + UDP-N-acetyl-alpha-D-glucosamine = 3-O-(N-acetyl-beta-D-glucosaminyl-(1-&gt;3)-alpha-L-fucosyl)-L-threonyl-[EGF-like domain protein] + UDP + H(+). The enzyme catalyses 3-O-(alpha-L-fucosyl)-L-seryl-[EGF-like domain protein] + UDP-N-acetyl-alpha-D-glucosamine = 3-O-(N-acetyl-beta-D-glucosaminyl-(1-&gt;3)-alpha-L-fucosyl)-L-seryl-[EGF-like domain protein] + UDP + H(+). Functionally, glycosyltransferase that initiates the elongation of O-linked fucose residues attached to EGF-like repeats in the extracellular domain of Notch molecules. Modulates NOTCH1 activity by modifying O-fucose residues at specific EGF-like domains resulting in enhancement of NOTCH1 activation by DLL1 and JAG1. May be involved in limb formation and in neurogenesis. The sequence is that of Beta-1,3-N-acetylglucosaminyltransferase radical fringe from Mus musculus (Mouse).